The following is a 421-amino-acid chain: Gamma-glutamyl phosphate reductase (421 aa).

It belongs to the gamma-glutamyl phosphate reductase family.

The protein resides in the cytoplasm. It catalyses the reaction L-glutamate 5-semialdehyde + phosphate + NADP(+) = L-glutamyl 5-phosphate + NADPH + H(+). The protein operates within amino-acid biosynthesis; L-proline biosynthesis; L-glutamate 5-semialdehyde from L-glutamate: step 2/2. Its function is as follows. Catalyzes the NADPH-dependent reduction of L-glutamate 5-phosphate into L-glutamate 5-semialdehyde and phosphate. The product spontaneously undergoes cyclization to form 1-pyrroline-5-carboxylate. In Dinoroseobacter shibae (strain DSM 16493 / NCIMB 14021 / DFL 12), this protein is Gamma-glutamyl phosphate reductase.